A 150-amino-acid chain; its full sequence is MKYQQLENLESGWKWKYLVKKHREGELITRYIEASAAQEAVDVLLSLENEPVLVNGWIDKHMNPELVNRMKQTIRARRKRHFNAEHQHTRKKSIDLEFIVWQRLAGLAQRRGKTLSETIVQLIEDAENKEKYANKMSSLKHDLQALLGKE.

Belongs to the MatP family. In terms of assembly, homodimer.

The protein resides in the cytoplasm. Its function is as follows. Required for spatial organization of the terminus region of the chromosome (Ter macrodomain) during the cell cycle. Prevents early segregation of duplicated Ter macrodomains during cell division. Binds specifically to matS, which is a 13 bp signature motif repeated within the Ter macrodomain. The polypeptide is Macrodomain Ter protein (Escherichia coli O8 (strain IAI1)).